The chain runs to 326 residues: Lipid droplet-associated hydrolase (326 aa).

Ser140 functions as the Nucleophile in the catalytic mechanism. Catalysis depends on charge relay system residues Asp272 and His301.

The protein belongs to the AB hydrolase superfamily. LDAH family. As to expression, expressed in liver, adrenal gland, prostate, spleen, kidney, brown and white adipose tissue, testis and to a lesser extent in brain (at protein level). Expressed in peritoneal macrophages and bone marrow-derived macrophages (at protein level). Highly expressed in macrophage and foam cell-rich areas in atherosclerotic lesions (at protein level). mRNA, but no protein, expressed in heart and muscle.

It localises to the lipid droplet. Its subcellular location is the endoplasmic reticulum. The catalysed reaction is a cholesterol ester + H2O = cholesterol + a fatty acid + H(+). Functionally, probable serine lipid hydrolase associated with lipid droplets. Has low cholesterol esterase activity. Appears to lack triglyceride lipase activity. Involved in cholesterol and triglyceride homeostasis; stimulates cellular triglyceride accumulation and cellular cholesterol release. Acts antagonistically with PNPLA2/ATGL in regulation of cellular lipid stores. May regulate triglyceride accumulation indirectly through stimulation of PNPLA2/ATGL ubiquitination and proteasomal degradation. Promotes microtubule-dependent lipid droplet fusion. Highly expressed in macrophage-rich areas in atherosclerotic lesions, suggesting that it could promote cholesterol ester turnover in macrophages. Stimulates cellular triglyceride accumulation and lipid droplet fusion. In terms of biological role, associates with lipid droplets but does not stimulate cellular triglyceride accumulation, lipid droplet fusion or ATGL proteasomal degradation. This chain is Lipid droplet-associated hydrolase, found in Mus musculus (Mouse).